Here is a 567-residue protein sequence, read N- to C-terminus: Signal transducer and activator of transcription b (567 aa).

In terms of domain architecture, SH2 spans 449–548 (WYDGLVYGFC…LGGRNKPRIR (100 aa)).

Belongs to the transcription factor STAT family. May interact with sodium-dependent transporter snf-12; the interaction is probably direct.

It localises to the cytoplasm. Its subcellular location is the nucleus. The protein localises to the vesicle. Carries out a dual function: signal transduction and activation of transcription. Required, in concert with transcription factor elt-3, for up-regulation of the vacuolar H(+)-ATPase and acceleration of lysosome maturation at molt. As part of the innate immune response to molting and injury of the adult epidermis, positively regulates the expression of epidermal antimicrobial peptides, such as nlp-29. Through positively modulating the expression of epidermal antimicrobial peptides, such as nlp-29, plays a role in resistance to fungal infection and in the response to physical wounding and phorbol ester PMA treatment. Functions cell autonomously in the epidermis, in concert with sodium-dependent transporter snf-12, probably acting at vesicular membranes, downstream of a p38 MAPK/pmk-1 pathway. This Caenorhabditis elegans protein is Signal transducer and activator of transcription b.